Here is a 440-residue protein sequence, read N- to C-terminus: Enolase 1 (440 aa).

Positions 161 and 170 each coordinate substrate. The active-site Proton donor is the Glu213. 3 residues coordinate Mg(2+): Asp248, Glu297, and Asp324. Substrate is bound by residues Glu297 and Asp324. Lys349 serves as the catalytic Proton acceptor. Residues 376–379 and Lys400 contribute to the substrate site; that span reads SHRS.

Belongs to the enolase family. As to quaternary structure, homodimer. It depends on Mg(2+) as a cofactor.

It is found in the cytoplasm. The catalysed reaction is (2R)-2-phosphoglycerate = phosphoenolpyruvate + H2O. It participates in carbohydrate degradation; glycolysis; pyruvate from D-glyceraldehyde 3-phosphate: step 4/5. The protein is Enolase 1 (ENO1) of Candida albicans (strain SC5314 / ATCC MYA-2876) (Yeast).